The sequence spans 534 residues: Glutamyl-tRNA(Gln) amidotransferase subunit B, mitochondrial (534 aa).

A mitochondrion-targeting transit peptide spans 1 to 28 (MTVLCRLRHCHLSTPTLCRRFHDARVYK).

It belongs to the GatB/GatE family. GatB subfamily. Subunit of the heterotrimeric GatCAB amidotransferase (AdT) complex, composed of A, B and C subunits.

It localises to the mitochondrion. The enzyme catalyses L-glutamyl-tRNA(Gln) + L-glutamine + ATP + H2O = L-glutaminyl-tRNA(Gln) + L-glutamate + ADP + phosphate + H(+). Functionally, allows the formation of correctly charged Gln-tRNA(Gln) through the transamidation of misacylated Glu-tRNA(Gln) in the mitochondria. The reaction takes place in the presence of glutamine and ATP through an activated gamma-phospho-Glu-tRNA(Gln). The sequence is that of Glutamyl-tRNA(Gln) amidotransferase subunit B, mitochondrial from Laccaria bicolor (strain S238N-H82 / ATCC MYA-4686) (Bicoloured deceiver).